The primary structure comprises 424 residues: Histidine--tRNA ligase (424 aa).

The protein belongs to the class-II aminoacyl-tRNA synthetase family. Homodimer.

Its subcellular location is the cytoplasm. It catalyses the reaction tRNA(His) + L-histidine + ATP = L-histidyl-tRNA(His) + AMP + diphosphate + H(+). The polypeptide is Histidine--tRNA ligase (Escherichia coli (strain SE11)).